The sequence spans 205 residues: Urease accessory protein UreG (205 aa).

Residue 11–18 coordinates GTP; that stretch reads GPVGSGKT.

It belongs to the SIMIBI class G3E GTPase family. UreG subfamily. Homodimer. UreD, UreF and UreG form a complex that acts as a GTP-hydrolysis-dependent molecular chaperone, activating the urease apoprotein by helping to assemble the nickel containing metallocenter of UreC. The UreE protein probably delivers the nickel.

It localises to the cytoplasm. Functionally, facilitates the functional incorporation of the urease nickel metallocenter. This process requires GTP hydrolysis, probably effectuated by UreG. The chain is Urease accessory protein UreG from Prochlorococcus marinus (strain NATL1A).